Consider the following 363-residue polypeptide: NAD(P)H-quinone oxidoreductase subunit 1, chloroplastic (363 aa).

A run of 7 helical transmembrane segments spans residues 30–50, 104–124, 129–149, 248–268, 269–289, 300–320, and 336–356; these read FIPIFTPVLGITIGVLVIVWL, IAVISILVSYSVVPFGSHLVL, IGVFLWIAISSIAPIGLLMSG, YSGIKFGLFYVASYLNLLVSS, LFVTILYLGGWNISIPYIFVF, VFEPTIGMFITLAKTYLFLFI, and LLNLGWKFLLPISLGNLLLTT.

Belongs to the complex I subunit 1 family. NDH is composed of at least 16 different subunits, 5 of which are encoded in the nucleus.

The protein resides in the plastid. Its subcellular location is the chloroplast thylakoid membrane. It catalyses the reaction a plastoquinone + NADH + (n+1) H(+)(in) = a plastoquinol + NAD(+) + n H(+)(out). The catalysed reaction is a plastoquinone + NADPH + (n+1) H(+)(in) = a plastoquinol + NADP(+) + n H(+)(out). NDH shuttles electrons from NAD(P)H:plastoquinone, via FMN and iron-sulfur (Fe-S) centers, to quinones in the photosynthetic chain and possibly in a chloroplast respiratory chain. The immediate electron acceptor for the enzyme in this species is believed to be plastoquinone. Couples the redox reaction to proton translocation, and thus conserves the redox energy in a proton gradient. The chain is NAD(P)H-quinone oxidoreductase subunit 1, chloroplastic from Morus indica (Mulberry).